The primary structure comprises 130 residues: Small ribosomal subunit protein uS9 (130 aa).

The protein belongs to the universal ribosomal protein uS9 family.

The sequence is that of Small ribosomal subunit protein uS9 from Bacillus thuringiensis subsp. konkukian (strain 97-27).